The primary structure comprises 209 residues: Large ribosomal subunit protein uL3 (209 aa).

N5-methylglutamine is present on Gln-150.

Belongs to the universal ribosomal protein uL3 family. Part of the 50S ribosomal subunit. Forms a cluster with proteins L14 and L19. In terms of processing, methylated by PrmB.

Functionally, one of the primary rRNA binding proteins, it binds directly near the 3'-end of the 23S rRNA, where it nucleates assembly of the 50S subunit. The protein is Large ribosomal subunit protein uL3 of Pasteurella multocida (strain Pm70).